Consider the following 361-residue polypeptide: Feruloyl CoA ortho-hydroxylase 2 (361 aa).

One can recognise a Fe2OG dioxygenase domain in the interval 211-312 (GSTRINLNYY…RISVPIFVSP (102 aa)). Tyr-220 is a 2-oxoglutarate binding site. 3 residues coordinate Fe cation: His-235, Asp-237, and His-293. 2-oxoglutarate is bound by residues Arg-303 and Ser-305.

It belongs to the iron/ascorbate-dependent oxidoreductase family. Requires L-ascorbate as cofactor. Fe(2+) serves as cofactor. As to expression, low expression in roots.

It catalyses the reaction (E)-feruloyl-CoA + 2-oxoglutarate + O2 = (E)-6-hydroxyferuloyl-CoA + succinate + CO2. The catalysed reaction is (E)-6-hydroxyferuloyl-CoA = scopoletin + CoA. Its function is as follows. 2-oxoglutarate (OG)- and Fe(II)-dependent dioxygenase (2OGD)involved in scopoletin biosynthesis. Converts feruloyl CoA into 6'-hydroxyferuloyl CoA but has no activity with ferulic acid, feruloylquinic acid, caffeic acid, caffeoyl CoA, p-coumaric acid, cinnamic acid, cinnamoyl CoA or benzoyl CoA. The protein is Feruloyl CoA ortho-hydroxylase 2 of Arabidopsis thaliana (Mouse-ear cress).